A 137-amino-acid polypeptide reads, in one-letter code: Peptide methionine sulfoxide reductase MsrB (137 aa).

The region spanning 7–129 (VDDLKENLSE…NSASLSFTDE (123 aa)) is the MsrB domain. Cysteine 46, cysteine 49, cysteine 95, and cysteine 98 together coordinate Zn(2+). The active-site Nucleophile is cysteine 118.

Belongs to the MsrB Met sulfoxide reductase family. It depends on Zn(2+) as a cofactor.

The enzyme catalyses L-methionyl-[protein] + [thioredoxin]-disulfide + H2O = L-methionyl-(R)-S-oxide-[protein] + [thioredoxin]-dithiol. The sequence is that of Peptide methionine sulfoxide reductase MsrB from Escherichia fergusonii (strain ATCC 35469 / DSM 13698 / CCUG 18766 / IAM 14443 / JCM 21226 / LMG 7866 / NBRC 102419 / NCTC 12128 / CDC 0568-73).